Reading from the N-terminus, the 171-residue chain is Myosin regulatory light polypeptide 9 (171 aa).

Basic residues predominate over residues Met1 to Pro15. Residues Met1–Asn21 are disordered. The residue at position 2 (Ser2) is an N-acetylserine. A Phosphothreonine; by MLCK, CIT and ROCK2 modification is found at Thr19. Ser20 bears the Phosphoserine; by CDC42BP, CIT, MLCK, PAK1, ROCK1, ROCK2, DAPK1, DAPK2 and ZIPK/DAPK3 mark. 2 EF-hand domains span residues Ser29–Asn64 and Asp98–Arg133. Residues Asp42, Asn44, Asp46, and Asp53 each coordinate Ca(2+).

In terms of assembly, myosin is a hexamer of 2 heavy chains and 4 light chains: interacts with myosin heavy chain MYO19. Interacts with LUZP1; the interaction results in inhibition of phosphorylation of MYL9 by DAPK3. Phosphorylation increases the actin-activated myosin ATPase activity and thereby regulates the contractile activity. It is required to generate the driving force in the migration of the cells but not necessary for localization of myosin-2 at the leading edge. Phosphorylation is required for myotube formation. Phosphorylated by DAPK3; DAPK3-mediated phosphorylation is inhibited by LUZP1. Smooth muscle tissues and in some, but not all, nonmuscle cells.

Its subcellular location is the cytoplasm. It localises to the cytoskeleton. The protein resides in the cell cortex. Functionally, myosin regulatory subunit that plays an important role in regulation of both smooth muscle and nonmuscle cell contractile activity via its phosphorylation. Implicated in cytokinesis, receptor capping, and cell locomotion. In myoblasts, may regulate PIEZO1-dependent cortical actomyosin assembly involved in myotube formation. This Rattus norvegicus (Rat) protein is Myosin regulatory light polypeptide 9 (Myl9).